A 180-amino-acid chain; its full sequence is NAD(P)H-quinone oxidoreductase subunit I, chloroplastic (180 aa).

2 4Fe-4S ferredoxin-type domains span residues 55–84 and 95–124; these read GRIH…VDWR and LNYS…MTEE. Cys64, Cys67, Cys70, Cys74, Cys104, Cys107, Cys110, and Cys114 together coordinate [4Fe-4S] cluster.

Belongs to the complex I 23 kDa subunit family. In terms of assembly, NDH is composed of at least 16 different subunits, 5 of which are encoded in the nucleus. The cofactor is [4Fe-4S] cluster.

The protein localises to the plastid. It localises to the chloroplast thylakoid membrane. The catalysed reaction is a plastoquinone + NADH + (n+1) H(+)(in) = a plastoquinol + NAD(+) + n H(+)(out). The enzyme catalyses a plastoquinone + NADPH + (n+1) H(+)(in) = a plastoquinol + NADP(+) + n H(+)(out). In terms of biological role, NDH shuttles electrons from NAD(P)H:plastoquinone, via FMN and iron-sulfur (Fe-S) centers, to quinones in the photosynthetic chain and possibly in a chloroplast respiratory chain. The immediate electron acceptor for the enzyme in this species is believed to be plastoquinone. Couples the redox reaction to proton translocation, and thus conserves the redox energy in a proton gradient. This is NAD(P)H-quinone oxidoreductase subunit I, chloroplastic from Liriodendron tulipifera (Tuliptree).